A 1828-amino-acid polypeptide reads, in one-letter code: Unconventional myosin-Va (1828 aa).

Position 2 is an N-acetylalanine (A2). In terms of domain architecture, Myosin N-terminal SH3-like spans 8-60 (TKFARVWIPDPEEVWKSAELLKDYKPGDKVLLLHLEEGKDLEYRLDPKTSELP). Positions 69–763 (VGENDLTALS…QVAYLEKLRA (695 aa)) constitute a Myosin motor domain. An ATP-binding site is contributed by 163–170 (GESGAGKT). The disordered stretch occupies residues 599–633 (ISPTSATSSGRTPLTRVPVKPTKGRPGQTAKEHKK). The residue at position 600 (S600) is a Phosphoserine. The segment covering 600-610 (SPTSATSSGRT) has biased composition (polar residues). The interval 643–665 (LHLLMETLNATTPHYVRCIKPND) is actin-binding. IQ domains follow at residues 766–788 (LRAA…RYLC), 789–813 (MQRA…KFLR), 814–836 (RTKA…KYKI), 837–861 (RRAA…RKIL), 862–884 (REHK…HYKR), and 885–914 (TMKA…EARS). Coiled-coil stretches lie at residues 914–1239 (SVER…EVNA) and 1314–1418 (GLKE…ELEV). Position 1032 is a phosphothreonine (T1032). The segment at 1105 to 1147 (VPKPGHKRTDSTHSSNESEYTFSSEFAETEDIAPRTEEPTEKK) is disordered. Residues 1116–1130 (THSSNESEYTFSSEF) are compositionally biased toward polar residues. The segment covering 1136–1147 (IAPRTEEPTEKK) has biased composition (basic and acidic residues). Phosphoserine is present on residues S1425 and S1625. The Dilute domain maps to 1507 to 1783 (TSTINSIKKV…IRTIQVRLRD (277 aa)). T1733 carries the phosphothreonine modification.

It belongs to the TRAFAC class myosin-kinesin ATPase superfamily. Myosin family. As to quaternary structure, may be a homodimer, which associates with multiple calmodulin or myosin light chains. Interacts with RIPL2, the interaction is required for its role in dendrite formation. Interacts with MLPH. Interacts with SYTL4. Interacts with MYRIP. Interacts with RAB10; mediates the transport to the plasma membrane of SLC2A4/GLUT4 storage vesicles. Interacts with FMR1; this interaction occurs in association with polyribosome.

The catalysed reaction is ATP + H2O = ADP + phosphate + H(+). Functionally, processive actin-based motor that can move in large steps approximating the 36-nm pseudo-repeat of the actin filament. Can hydrolyze ATP in the presence of actin, which is essential for its function as a motor protein. Involved in melanosome transport. Also mediates the transport of vesicles to the plasma membrane. May also be required for some polarization process involved in dendrite formation. This Rattus norvegicus (Rat) protein is Unconventional myosin-Va (Myo5a).